Here is a 119-residue protein sequence, read N- to C-terminus: Ghilanten (119 aa).

Glutamine 1 bears the Pyrrolidone carboxylic acid mark. Intrachain disulfides connect cysteine 8–cysteine 19, cysteine 13–cysteine 26, cysteine 28–cysteine 48, cysteine 33–cysteine 51, cysteine 37–cysteine 53, cysteine 62–cysteine 73, cysteine 67–cysteine 80, cysteine 82–cysteine 103, cysteine 88–cysteine 106, and cysteine 92–cysteine 108. The Antistasin-like 1 domain maps to 28 to 53; that stretch reads CPEVRCRVYCSHGFQRSRYGCEVCRC. One can recognise an Antistasin-like 2 domain in the interval 83–108; sequence KIDINCRKTCPNGLKRDKLGCEYCEC. Heparin is bound by residues 97–100 and 111–118; these read KRDK and KRKLVPRL.

This sequence belongs to the protease inhibitor I15 (antistasin) family.

The protein localises to the secreted. Functionally, this highly disulfide-bonded protein is a potent inhibitor of factor Xa. May have therapeutic utility as an anticoagulant. Also exhibits a strong metastatic activity. The polypeptide is Ghilanten (Haementeria ghilianii (Amazon leech)).